We begin with the raw amino-acid sequence, 319 residues long: MTEQGMHQELREGAGTAGDEGGLEAAAMDGGADNGIDVVLVTGLSGAGRGTAAKVLEDLGWYVADNLPPELIAQMVDLGLAAGSRITQLAVVMDVRSRGFTGDLDWVRTELATRNIVPRVLFLEASDDILVRRYEQNRRSHPLQGNQTLAEGIAAERTMLAPVRASADLVIDTSSLSVHALRDSIERAFAGETVAHTNVTVESFGYKYGLPMDADTVMDVRFLPNPHWVDRLRPNTGQHHEVRDYVLGQPGALEFLDSYHQLLDVVIDGYRREGKRYMTVAIGCTGGKHRSVAMAEALAERLQDSDLTVRVLHRDLGRE.

The span at 1-12 (MTEQGMHQELRE) shows a compositional bias: basic and acidic residues. The interval 1–26 (MTEQGMHQELREGAGTAGDEGGLEAA) is disordered. 43–50 (GLSGAGRG) contributes to the ATP binding site. 94–97 (DVRS) contacts GTP.

This sequence belongs to the RapZ-like family.

Its function is as follows. Displays ATPase and GTPase activities. This is Nucleotide-binding protein Mvan_2698 from Mycolicibacterium vanbaalenii (strain DSM 7251 / JCM 13017 / BCRC 16820 / KCTC 9966 / NRRL B-24157 / PYR-1) (Mycobacterium vanbaalenii).